The primary structure comprises 287 residues: MAVGKEIKTKIASVKNTQKITSAMEMVAASKMRKAQEGMAASRPYATNIRNVIGHIALGNLEYRHPYMEERETKRVGYIVVSTDRGLCGGLNINLFKKVLADAAEKQASGAEVEFGVVGSKATSFFNNMGAKVSAQISGLGDSPSLTDLVGSVAVMLKAYDNGEIDKLYVVYNKFVNTMTQDATIDQLLPLPKSDDEEISHRWDYIYEPDANSLLDKLLVRYIESQVYQGVVENIACEQAARMVAMKAATDNAGDLIDDLQLVYNKARQAAITQELGEIVAGAAAVG.

This sequence belongs to the ATPase gamma chain family. In terms of assembly, F-type ATPases have 2 components, CF(1) - the catalytic core - and CF(0) - the membrane proton channel. CF(1) has five subunits: alpha(3), beta(3), gamma(1), delta(1), epsilon(1). CF(0) has three main subunits: a, b and c.

The protein resides in the cell inner membrane. Produces ATP from ADP in the presence of a proton gradient across the membrane. The gamma chain is believed to be important in regulating ATPase activity and the flow of protons through the CF(0) complex. The chain is ATP synthase gamma chain from Colwellia psychrerythraea (strain 34H / ATCC BAA-681) (Vibrio psychroerythus).